The sequence spans 402 residues: Glutamyl-tRNA reductase (402 aa).

Residues 48–51 (TCNR), Ser91, 96–98 (EDQ), and Gln102 each bind substrate. Cys49 (nucleophile) is an active-site residue. An NADP(+)-binding site is contributed by 171–176 (GAGKMG).

This sequence belongs to the glutamyl-tRNA reductase family. As to quaternary structure, homodimer.

The catalysed reaction is (S)-4-amino-5-oxopentanoate + tRNA(Glu) + NADP(+) = L-glutamyl-tRNA(Glu) + NADPH + H(+). Its pathway is porphyrin-containing compound metabolism; protoporphyrin-IX biosynthesis; 5-aminolevulinate from L-glutamyl-tRNA(Glu): step 1/2. Catalyzes the NADPH-dependent reduction of glutamyl-tRNA(Glu) to glutamate 1-semialdehyde (GSA). This is Glutamyl-tRNA reductase from Methanothermobacter thermautotrophicus (strain ATCC 29096 / DSM 1053 / JCM 10044 / NBRC 100330 / Delta H) (Methanobacterium thermoautotrophicum).